The sequence spans 629 residues: Bifunctional protein ArgHA (629 aa).

An argininosuccinate lyase region spans residues 1–499 (MALWGGRFSQ…NLPRSRSDLV (499 aa)). Residues 464 to 598 (ISIRAARLTD…EKVLKDCDMC (135 aa)) form the N-acetyltransferase domain. The amino-acid acetyltransferase stretch occupies residues 500 to 629 (KAVGTFAVTE…INLKAEKLAS (130 aa)).

The protein in the N-terminal section; belongs to the lyase 1 family. Argininosuccinate lyase subfamily. In the C-terminal section; belongs to the acetyltransferase family. ArgA subfamily.

Its subcellular location is the cytoplasm. It catalyses the reaction 2-(N(omega)-L-arginino)succinate = fumarate + L-arginine. It carries out the reaction L-glutamate + acetyl-CoA = N-acetyl-L-glutamate + CoA + H(+). The protein operates within amino-acid biosynthesis; L-arginine biosynthesis; N(2)-acetyl-L-ornithine from L-glutamate: step 1/4. It functions in the pathway amino-acid biosynthesis; L-arginine biosynthesis; L-arginine from L-ornithine and carbamoyl phosphate: step 3/3. The polypeptide is Bifunctional protein ArgHA (argHA) (Moritella abyssi).